The sequence spans 357 residues: UPF0283 membrane protein BSUIS_A1077 (357 aa).

The segment at 1–36 is disordered; that stretch reads MSDKTPRKPTAFRLEQPARVSAASEQEEPRHPRAVK. The segment covering 27–36 has biased composition (basic and acidic residues); that stretch reads EEPRHPRAVK. 2 helical membrane-spanning segments follow: residues 78-98 and 109-129; these read ILFG…TEDL and LGWT…AIIL.

This sequence belongs to the UPF0283 family.

Its subcellular location is the cell inner membrane. This Brucella suis (strain ATCC 23445 / NCTC 10510) protein is UPF0283 membrane protein BSUIS_A1077.